Consider the following 1032-residue polypeptide: Probable LRR receptor-like serine/threonine-protein kinase At1g56130 (1032 aa).

Residues 1–29 (MTRIRRSPCLLLLIIWFMCIAGSVQVVQS) form the signal peptide. Topologically, residues 30 to 636 (QNQTGATTHP…PPSKGKNRTG (607 aa)) are extracellular. 3 N-linked (GlcNAc...) asparagine glycosylation sites follow: N31, N61, and N95. 10 LRR repeats span residues 101-122 (ITNI…LWTL), 123-146 (TYLT…IGNL), 148-170 (RMQW…IGLL), 171-194 (TDLR…IGRC), 196-217 (KLQQ…SFAN), 242-265 (WTKL…SFSN), 290-314 (MKSL…IGEH), 315-338 (SSLR…LFNL), 340-360 (QLTH…TQKT), and 361-385 (QSLR…SLPS). N-linked (GlcNAc...) asparagine glycosylation is present at N145. A glycan (N-linked (GlcNAc...) asparagine) is linked at N182. Residues N265, N302, N337, N348, and N352 are each glycosylated (N-linked (GlcNAc...) asparagine). N-linked (GlcNAc...) asparagine glycosylation is found at N394, N580, and N633. Residues 637-657 (TIVGVIVGVGLLSILAGVVMF) form a helical membrane-spanning segment. Topologically, residues 658 to 1032 (TIRKRRKRYT…MLGSKINEGR (375 aa)) are cytoplasmic. T683 carries the phosphothreonine modification. The region spanning 694 to 968 (FDPSNKLGEG…VAMLSGDVEI (275 aa)) is the Protein kinase domain. Residues 700 to 708 (LGEGGFGPV) and K722 contribute to the ATP site. Y767 is subject to Phosphotyrosine. D818 functions as the Proton acceptor in the catalytic mechanism. S822 and S851 each carry phosphoserine. Phosphothreonine is present on residues T852 and T857. Position 865 is a phosphotyrosine (Y865). Residues 1008-1032 (APGSEISPRDSDFKPMLGSKINEGR) are disordered.

Belongs to the protein kinase superfamily. Ser/Thr protein kinase family.

Its subcellular location is the cell membrane. It catalyses the reaction L-seryl-[protein] + ATP = O-phospho-L-seryl-[protein] + ADP + H(+). It carries out the reaction L-threonyl-[protein] + ATP = O-phospho-L-threonyl-[protein] + ADP + H(+). This is Probable LRR receptor-like serine/threonine-protein kinase At1g56130 from Arabidopsis thaliana (Mouse-ear cress).